The chain runs to 252 residues: 5'-nucleotidase SurE (252 aa).

The a divalent metal cation site is built by aspartate 8, aspartate 9, serine 40, and asparagine 92.

The protein belongs to the SurE nucleotidase family. A divalent metal cation serves as cofactor.

It localises to the cytoplasm. It catalyses the reaction a ribonucleoside 5'-phosphate + H2O = a ribonucleoside + phosphate. In terms of biological role, nucleotidase that shows phosphatase activity on nucleoside 5'-monophosphates. The chain is 5'-nucleotidase SurE from Chelativorans sp. (strain BNC1).